Consider the following 347-residue polypeptide: Anthranilate phosphoribosyltransferase (347 aa).

Residues Gly-88, 91-92, Thr-96, 98-101, 116-124, and Ser-128 each bind 5-phospho-alpha-D-ribose 1-diphosphate; these read GD, NIST, and KHGNRSVSS. Gly-88 lines the anthranilate pocket. Ser-100 contributes to the Mg(2+) binding site. Residue Asn-119 coordinates anthranilate. Arg-174 contributes to the anthranilate binding site. The Mg(2+) site is built by Asp-232 and Glu-233.

Belongs to the anthranilate phosphoribosyltransferase family. As to quaternary structure, homodimer. Mg(2+) serves as cofactor.

It carries out the reaction N-(5-phospho-beta-D-ribosyl)anthranilate + diphosphate = 5-phospho-alpha-D-ribose 1-diphosphate + anthranilate. It functions in the pathway amino-acid biosynthesis; L-tryptophan biosynthesis; L-tryptophan from chorismate: step 2/5. Its function is as follows. Catalyzes the transfer of the phosphoribosyl group of 5-phosphorylribose-1-pyrophosphate (PRPP) to anthranilate to yield N-(5'-phosphoribosyl)-anthranilate (PRA). This chain is Anthranilate phosphoribosyltransferase, found in Shewanella sp. (strain ANA-3).